We begin with the raw amino-acid sequence, 159 residues long: Probable minor fimbrial protein (159 aa).

Residues 1–6 (MKKMHG) constitute a propeptide, leader sequence. Phe7 carries the post-translational modification N-methylphenylalanine. Residues 7–29 (FTLIELMIVVAIIGVLASIALMQ) traverse the membrane as a helical segment. 2 disulfides stabilise this stretch: Cys56–Cys71 and Cys140–Cys153.

It belongs to the N-Me-Phe pilin family. The pili are polar flexible filaments of about 5.4 nanometers diameter and 2.5 micrometers average length; they consist of only a single polypeptide chain arranged in a helical configuration of five subunits per turn in the assembled pilus.

It localises to the fimbrium. Its subcellular location is the membrane. The protein is Probable minor fimbrial protein (fimZ) of Dichelobacter nodosus (Bacteroides nodosus).